A 651-amino-acid chain; its full sequence is Beta-mannosyltransferase 7 (651 aa).

Topologically, residues 1–19 (MKLEMSSYLHKVPNTGITN) are cytoplasmic. Residues 20-42 (LSNSKSIVFIMFCATLLFIITSS) traverse the membrane as a helical segment. Over 43-651 (RYLTGSESLG…VKIDEKSEET (609 aa)) the chain is Extracellular. N-linked (GlcNAc...) asparagine glycosylation is found at N271 and N423.

It belongs to the BMT family.

The protein localises to the membrane. Beta-mannosyltransferase involved in cell wall biosynthesis through beta-1,2-mannosylation of cell wall phosphopeptidomannan. This chain is Beta-mannosyltransferase 7 (BMT7), found in Candida albicans (strain SC5314 / ATCC MYA-2876) (Yeast).